A 473-amino-acid polypeptide reads, in one-letter code: Bifunctional NAD(P)H-hydrate repair enzyme Nnr (473 aa).

The segment at 1–211 (MRHYYSVDTI…AHTDVLGFEA (211 aa)) is NAD(P)H-hydrate epimerase. One can recognise a YjeF N-terminal domain in the interval 10–205 (IRAAEAPLLA…DIGLDLAHTD (196 aa)). Residues 62–66 (DNGGD) form an NADPHX 1; for epimerase activity region. Residues asparagine 63 and aspartate 119 each coordinate K(+). Positions 123–129 (GISGSGP) are NADPHX 1; for epimerase activity. (6S)-NADPHX is bound at residue aspartate 152. K(+) is bound at residue serine 155. The YjeF C-terminal domain maps to 210–473 (EATDVAARWP…GHIRAALAAL (264 aa)). The tract at residues 211–473 (ATDVAARWPV…GHIRAALAAL (263 aa)) is ADP-dependent (S)-NAD(P)H-hydrate dehydratase. Residue glycine 298 participates in (6S)-NADPHX binding. The interval 348 to 354 (HAGEFAR) is NADPHX 2; for dehydratase activity. Residues 382–386 (KGNVT) and 402–411 (QSWAATAGSG) each bind ADP. (6S)-NADPHX is bound at residue aspartate 412.

The protein in the N-terminal section; belongs to the NnrE/AIBP family. It in the C-terminal section; belongs to the NnrD/CARKD family. K(+) serves as cofactor.

It carries out the reaction (6S)-NADHX + ADP = AMP + phosphate + NADH + H(+). The enzyme catalyses (6S)-NADPHX + ADP = AMP + phosphate + NADPH + H(+). The catalysed reaction is (6R)-NADHX = (6S)-NADHX. It catalyses the reaction (6R)-NADPHX = (6S)-NADPHX. In terms of biological role, bifunctional enzyme that catalyzes the epimerization of the S- and R-forms of NAD(P)HX and the dehydration of the S-form of NAD(P)HX at the expense of ADP, which is converted to AMP. This allows the repair of both epimers of NAD(P)HX, a damaged form of NAD(P)H that is a result of enzymatic or heat-dependent hydration. The polypeptide is Bifunctional NAD(P)H-hydrate repair enzyme Nnr (nnr) (Mycobacterium tuberculosis (strain CDC 1551 / Oshkosh)).